Reading from the N-terminus, the 429-residue chain is 4-hydroxy-3-methylbut-2-en-1-yl diphosphate synthase (flavodoxin) (429 aa).

[4Fe-4S] cluster is bound by residues Cys-310, Cys-313, Cys-356, and Glu-363.

This sequence belongs to the IspG family. The cofactor is [4Fe-4S] cluster.

It catalyses the reaction (2E)-4-hydroxy-3-methylbut-2-enyl diphosphate + oxidized [flavodoxin] + H2O + 2 H(+) = 2-C-methyl-D-erythritol 2,4-cyclic diphosphate + reduced [flavodoxin]. It functions in the pathway isoprenoid biosynthesis; isopentenyl diphosphate biosynthesis via DXP pathway; isopentenyl diphosphate from 1-deoxy-D-xylulose 5-phosphate: step 5/6. Its function is as follows. Converts 2C-methyl-D-erythritol 2,4-cyclodiphosphate (ME-2,4cPP) into 1-hydroxy-2-methyl-2-(E)-butenyl 4-diphosphate. The polypeptide is 4-hydroxy-3-methylbut-2-en-1-yl diphosphate synthase (flavodoxin) (Bradyrhizobium sp. (strain BTAi1 / ATCC BAA-1182)).